We begin with the raw amino-acid sequence, 1217 residues long: WD repeat-containing protein on Y chromosome (1217 aa).

8 WD repeats span residues 155-199 (EDMT…LRSA), 323-362 (RIPLGVSVFYVSEVKNILVTGGPDTFVRIWDVYISSEPSA), 366-405 (GHNGGIVAVFVQPEENKVYSVDYHKIIKVWDLQEHTLLQT), 456-495 (THAAPVSVVLYNRLFRNIVTCGLDSYIIVWDPWTGRRKII), 508-547 (TIDIEITAACFDPLEQFLLTGARDGSLKIWNYNNSVVVRN), 595-635 (FHTD…RRYN), 740-779 (KVGDCVLTMATDRKNRFLYTGTAFGYIKIWHIVNYCIPEA), and 823-862 (GHLKAINSIGFINLPKILFSGSHDYSCRLWTQSGRYLGTL). Disordered stretches follow at residues 910–929 (QVKRPKPTEEREDEGEVEDT) and 1033–1217 (AGGQ…KDKP). Over residues 919–929 (EREDEGEVEDT) the composition is skewed to acidic residues. Polar residues-rich tracts occupy residues 1041–1054 (RASSTWGKPKTNSI), 1085–1107 (FGPNPSRVRSNSPKVSFMPSQLK), and 1137–1179 (PVST…TSAN). Residues 1181 to 1190 (KPDIMPVKIK) are compositionally biased toward low complexity. Positions 1198–1210 (RNTAPVQITTSIA) are enriched in polar residues.

The protein is WD repeat-containing protein on Y chromosome of Drosophila mojavensis (Fruit fly).